We begin with the raw amino-acid sequence, 157 residues long: Putative glutathione-dependent formaldehyde-activating enzyme (157 aa).

The CENP-V/GFA domain occupies 3-134 (LEGSCHCGAV…WVEIESREQD (132 aa)). Zn(2+) contacts are provided by Cys7, Cys9, Cys27, Cys29, Cys32, Cys79, and Cys82.

The protein belongs to the Gfa family. Zn(2+) is required as a cofactor.

The catalysed reaction is S-(hydroxymethyl)glutathione = glutathione + formaldehyde. Its pathway is one-carbon metabolism; formaldehyde degradation; formate from formaldehyde (glutathione route): step 1/3. Catalyzes the condensation of formaldehyde and glutathione to S-hydroxymethylglutathione. The protein is Putative glutathione-dependent formaldehyde-activating enzyme of Halomonas elongata (strain ATCC 33173 / DSM 2581 / NBRC 15536 / NCIMB 2198 / 1H9).